We begin with the raw amino-acid sequence, 306 residues long: Acetyl-coenzyme A carboxylase carboxyl transferase subunit beta (306 aa).

The CoA carboxyltransferase N-terminal domain occupies Leu28–Val297. A disordered region spans residues Gln287–Ala306. Over residues Pro296–Ala306 the composition is skewed to pro residues.

The protein belongs to the AccD/PCCB family. Acetyl-CoA carboxylase is a heterohexamer composed of biotin carboxyl carrier protein (AccB), biotin carboxylase (AccC) and two subunits each of ACCase subunit alpha (AccA) and ACCase subunit beta (AccD).

It localises to the cytoplasm. The catalysed reaction is N(6)-carboxybiotinyl-L-lysyl-[protein] + acetyl-CoA = N(6)-biotinyl-L-lysyl-[protein] + malonyl-CoA. It functions in the pathway lipid metabolism; malonyl-CoA biosynthesis; malonyl-CoA from acetyl-CoA: step 1/1. Its function is as follows. Component of the acetyl coenzyme A carboxylase (ACC) complex. Biotin carboxylase (BC) catalyzes the carboxylation of biotin on its carrier protein (BCCP) and then the CO(2) group is transferred by the transcarboxylase to acetyl-CoA to form malonyl-CoA. This Methylorubrum populi (strain ATCC BAA-705 / NCIMB 13946 / BJ001) (Methylobacterium populi) protein is Acetyl-coenzyme A carboxylase carboxyl transferase subunit beta.